The sequence spans 466 residues: Methylenetetrahydrofolate--tRNA-(uracil-5-)-methyltransferase TrmFO (466 aa).

FAD is bound at residue 12 to 17; the sequence is GAGLAG.

It belongs to the MnmG family. TrmFO subfamily. Requires FAD as cofactor.

The protein localises to the cytoplasm. The enzyme catalyses uridine(54) in tRNA + (6R)-5,10-methylene-5,6,7,8-tetrahydrofolate + NADH + H(+) = 5-methyluridine(54) in tRNA + (6S)-5,6,7,8-tetrahydrofolate + NAD(+). The catalysed reaction is uridine(54) in tRNA + (6R)-5,10-methylene-5,6,7,8-tetrahydrofolate + NADPH + H(+) = 5-methyluridine(54) in tRNA + (6S)-5,6,7,8-tetrahydrofolate + NADP(+). Catalyzes the folate-dependent formation of 5-methyl-uridine at position 54 (M-5-U54) in all tRNAs. This Synechococcus elongatus (strain ATCC 33912 / PCC 7942 / FACHB-805) (Anacystis nidulans R2) protein is Methylenetetrahydrofolate--tRNA-(uracil-5-)-methyltransferase TrmFO.